The sequence spans 162 residues: Phospholipase A and acyltransferase 2 (162 aa).

Topologically, residues 1–133 are cytoplasmic; it reads MALARPRPRL…VSRSDQVTGA (133 aa). The LRAT domain occupies 13–129; the sequence is LIEISRFGYA…LRYGVSRSDQ (117 aa). Active-site residues include histidine 23 and histidine 35. Cysteine 113 acts as the Acyl-thioester intermediate in catalysis. A helical transmembrane segment spans residues 134 to 154; the sequence is VTTVGVAAGLLAAASLVGILL. Residues 155-162 are Lumenal-facing; the sequence is ARSKRERQ.

It belongs to the H-rev107 family. As to expression, expressed in liver, kidney, small intestine testis and colon. Undetectable in testis, placenta, salivary gland and fetal brain.

The protein resides in the cytoplasm. It is found in the membrane. It carries out the reaction a 1,2-diacyl-sn-glycero-3-phosphocholine + H2O = a 1-acyl-sn-glycero-3-phosphocholine + a fatty acid + H(+). It catalyses the reaction a 1,2-diacyl-sn-glycero-3-phosphocholine + H2O = a 2-acyl-sn-glycero-3-phosphocholine + a fatty acid + H(+). The catalysed reaction is a 1,2-diacyl-sn-glycero-3-phosphoethanolamine + a 1,2-diacyl-sn-glycero-3-phosphocholine = an N-acyl-1,2-diacyl-sn-glycero-3-phosphoethanolamine + a 1-acyl-sn-glycero-3-phosphocholine + H(+). The enzyme catalyses a 1,2-diacyl-sn-glycero-3-phosphoethanolamine + a 1,2-diacyl-sn-glycero-3-phosphocholine = an N-acyl-1,2-diacyl-sn-glycero-3-phosphoethanolamine + a 2-acyl-sn-glycero-3-phosphocholine + H(+). It carries out the reaction 1,2-dihexadecanoyl-sn-glycero-3-phosphocholine + H2O = 1-hexadecanoyl-sn-glycero-3-phosphocholine + hexadecanoate + H(+). It catalyses the reaction 1,2-dihexadecanoyl-sn-glycero-3-phosphocholine + H2O = 2-hexadecanoyl-sn-glycero-3-phosphocholine + hexadecanoate + H(+). The catalysed reaction is 1-hexadecanoyl-2-(9Z-octadecenoyl)-sn-glycero-3-phosphocholine + H2O = 2-(9Z-octadecenoyl)-sn-glycero-3-phosphocholine + hexadecanoate + H(+). The enzyme catalyses 1-hexadecanoyl-2-(9Z-octadecenoyl)-sn-glycero-3-phosphocholine + H2O = 1-hexadecanoyl-sn-glycero-3-phosphocholine + (9Z)-octadecenoate + H(+). It carries out the reaction 1-hexadecanoyl-2-(5Z,8Z,11Z,14Z-eicosatetraenoyl)-sn-glycero-3-phosphocholine + H2O = 2-(5Z,8Z,11Z,14Z)-eicosatetraenoyl-sn-glycero-3-phosphocholine + hexadecanoate + H(+). It catalyses the reaction 1-hexadecanoyl-2-(9Z,12Z-octadecadienoyl)-sn-glycero-3-phosphoethanolamine + H2O = 1-hexadecanoyl-sn-glycero-3-phosphoethanolamine + (9Z,12Z)-octadecadienoate + H(+). The catalysed reaction is 1-hexadecanoyl-2-(9Z,12Z-octadecadienoyl)-sn-glycero-3-phosphoethanolamine + H2O = 2-(9Z,12Z)-octadecadienoyl-sn-glycero-3-phosphoethanolamine + hexadecanoate + H(+). The enzyme catalyses 1-hexadecanoyl-2-(5Z,8Z,11Z,14Z-eicosatetraenoyl)-sn-glycero-3-phosphoethanolamine + H2O = 1-hexadecanoyl-sn-glycero-3-phosphoethanolamine + (5Z,8Z,11Z,14Z)-eicosatetraenoate + H(+). It carries out the reaction 1-hexadecanoyl-2-(5Z,8Z,11Z,14Z-eicosatetraenoyl)-sn-glycero-3-phosphoethanolamine + H2O = 2-(5Z,8Z,11Z,14Z)-eicosatetraenoyl-sn-glycero-3-phosphoethanolamine + hexadecanoate + H(+). It catalyses the reaction 1,2-di-(9Z-octadecenoyl)-sn-glycero-3-phosphoethanolamine + 1,2-dihexadecanoyl-sn-glycero-3-phosphocholine = N-hexadecanoyl-1,2-di-(9Z-octadecenoyl)-sn-glycero-3-phosphoethanolamine + 2-hexadecanoyl-sn-glycero-3-phosphocholine + H(+). The catalysed reaction is 1,2-di-(9Z-octadecenoyl)-sn-glycero-3-phosphoethanolamine + 1,2-dihexadecanoyl-sn-glycero-3-phosphocholine = N-hexadecanoyl-1,2-di-(9Z-octadecenoyl)-sn-glycero-3-phosphoethanolamine + 1-hexadecanoyl-sn-glycero-3-phosphocholine + H(+). The enzyme catalyses 1-hexanoyl-2-acyl-sn-glycero-3-phosphocholine + H2O = 1-hexanoyl-sn-glycero-3-phosphocholine + a fatty acid + H(+). It carries out the reaction 1,2-diheptadecanoyl-sn-glycero-3-phosphoethanolamine + 1-(9Z-octadecenoyl)-2-hexadecanoyl-sn-glycero-3-phosphocholine = 1,2-diheptadecanoyl-sn-glycero-3-phospho-N-hexadecanoyl-ethanolamine + 1-(9Z-octadecenoyl)-sn-glycero-3-phosphocholine + H(+). It catalyses the reaction 1,2-diheptadecanoyl-sn-glycero-3-phosphoethanolamine + 1-(9Z-octadecenoyl)-2-hexadecanoyl-sn-glycero-3-phosphocholine = 1,2-diheptadecanoyl-sn-glycero-3-phospho-N-(9Z-octadecenoyl)-ethanolamine + 2-hexadecanoyl-sn-glycero-3-phosphocholine + H(+). The catalysed reaction is 1,2-dihexanoyl-sn-glycero-3-phosphocholine + 1,2-diheptanoyl-sn-glycero-3-phosphocholine = 1-heptanoyl-2-hexanoyl-sn-glycero-3-phosphocholine + 1-hexanoyl-2-heptanoyl-sn-glycero-3-phosphocholine. The enzyme catalyses 1,2-diheptanoyl-sn-glycero-3-phosphocholine + 1,2-dihexadecanoyl-sn-glycero-3-phosphocholine = 1-hexadecanoyl-2-heptanoyl-sn-glycero-3-phosphocholine + 1-heptanoyl-2-hexadecanoyl-sn-glycero-3-phosphocholine. It carries out the reaction 1,2-dihexanoyl-sn-glycero-3-phosphoethanolamine + 1,2-diheptanoyl-sn-glycero-3-phosphocholine = 1-heptanoyl-2-hexanoyl-sn-glycero-3-phosphoethanolamine + 1-hexanoyl-2-heptanoyl-sn-glycero-3-phosphocholine. It catalyses the reaction 1-hexanoyl-2-acyl-sn-glycero-3-phosphocholine + H2O = hexanoate + a 2-acyl-sn-glycero-3-phosphocholine + H(+). The catalysed reaction is 1,2-dihexanoyl-sn-glycero-3-phosphoethanolamine + 2-heptanoyl-sn-glycero-3-phosphocholine = hexanoyl-sn-glycero-3-phosphoethanolamine + 1-hexanoyl-2-heptanoyl-sn-glycero-3-phosphocholine. Its function is as follows. Exhibits both phospholipase A1/2 and acyltransferase activities. Shows phospholipase A1 (PLA1) and A2 (PLA2) activity, catalyzing the calcium-independent release of fatty acids from the sn-1 or sn-2 position of glycerophospholipids. For most substrates, PLA1 activity is much higher than PLA2 activity. Shows O-acyltransferase activity, catalyzing the transfer of a fatty acyl group from glycerophospholipid to the hydroxyl group of lysophospholipid. Shows N-acyltransferase activity, catalyzing the calcium-independent transfer of a fatty acyl group at the sn-1 position of phosphatidylcholine (PC) and other glycerophospholipids to the primary amine of phosphatidylethanolamine (PE), forming N-acylphosphatidylethanolamine (NAPE), which serves as precursor for N-acylethanolamines (NAEs). Catalyzes N-acylation of PE using both sn-1 and sn-2 palmitoyl groups of PC as acyl donor. Exhibits high phospholipase A1/2 activity and low N-acyltransferase activity. This Homo sapiens (Human) protein is Phospholipase A and acyltransferase 2.